A 25-amino-acid chain; its full sequence is Gamma-conotoxin PiVIIA (25 aa).

3 disulfides stabilise this stretch: Cys-1/Cys-15, Cys-8/Cys-19, and Cys-14/Cys-24. A 4-hydroxyproline modification is found at Pro-4. Glu-13 and Glu-20 each carry 4-carboxyglutamate.

It belongs to the conotoxin O2 superfamily. Expressed by the venom duct.

The protein resides in the secreted. Functionally, micromolar concentrations of PiVIIA increase the magnitude of the macroscopic calcium current in DRG neurons from rat. An increase, even modest of the calcium current, may have a significant impact in the excitability and electrical activity of neurons, and may set up PiVIIA as a member of the pharmacological family of the gamma-conotoxins. The polypeptide is Gamma-conotoxin PiVIIA (Conus princeps (Prince cone)).